The primary structure comprises 386 residues: F420 non-reducing hydrogenase II small subunit (386 aa).

Residues 1 to 51 (MVEMSTGMKNLTRTLESMDFLKMDRRTFMKAVSALGATAFLGTYQTEIVNA) constitute a signal peptide (tat-type signal). [4Fe-4S] cluster contacts are provided by Cys-67, Cys-70, Cys-178, Cys-227, His-273, Cys-276, Cys-296, and Cys-302. Residues Cys-311, Cys-330, and Cys-333 each contribute to the [3Fe-4S] cluster site.

This sequence belongs to the [NiFe]/[NiFeSe] hydrogenase small subunit family. In terms of assembly, composed of a large subunit (VhtA), a small subunit (VhtG) and a cytochrome subunit (VhtC). [4Fe-4S] cluster is required as a cofactor. [3Fe-4S] cluster serves as cofactor. In terms of processing, predicted to be exported by the Tat system. The position of the signal peptide cleavage has not been experimentally proven.

The protein localises to the cell membrane. The catalysed reaction is methanophenazine + H2 = dihydromethanophenazine. Functionally, part of the F420 non-reducing hydrogenase II complex that catalyzes the reduction of methanophenazine to dihydromethanophenazine. This Methanosarcina mazei (strain ATCC BAA-159 / DSM 3647 / Goe1 / Go1 / JCM 11833 / OCM 88) (Methanosarcina frisia) protein is F420 non-reducing hydrogenase II small subunit.